Reading from the N-terminus, the 407-residue chain is Multifunctional CCA protein (407 aa).

Residues G8 and R11 each coordinate ATP. CTP contacts are provided by G8 and R11. Mg(2+)-binding residues include D21 and D23. The ATP site is built by R91, R137, and R140. 3 residues coordinate CTP: R91, R137, and R140. In terms of domain architecture, HD spans 228–329 (TGVHALMALA…VALFDRVDAW (102 aa)).

It belongs to the tRNA nucleotidyltransferase/poly(A) polymerase family. Bacterial CCA-adding enzyme type 1 subfamily. Monomer. Can also form homodimers and oligomers. It depends on Mg(2+) as a cofactor. The cofactor is Ni(2+).

It carries out the reaction a tRNA precursor + 2 CTP + ATP = a tRNA with a 3' CCA end + 3 diphosphate. The catalysed reaction is a tRNA with a 3' CCA end + 2 CTP + ATP = a tRNA with a 3' CCACCA end + 3 diphosphate. Its function is as follows. Catalyzes the addition and repair of the essential 3'-terminal CCA sequence in tRNAs without using a nucleic acid template. Adds these three nucleotides in the order of C, C, and A to the tRNA nucleotide-73, using CTP and ATP as substrates and producing inorganic pyrophosphate. tRNA 3'-terminal CCA addition is required both for tRNA processing and repair. Also involved in tRNA surveillance by mediating tandem CCA addition to generate a CCACCA at the 3' terminus of unstable tRNAs. While stable tRNAs receive only 3'-terminal CCA, unstable tRNAs are marked with CCACCA and rapidly degraded. This is Multifunctional CCA protein from Erwinia tasmaniensis (strain DSM 17950 / CFBP 7177 / CIP 109463 / NCPPB 4357 / Et1/99).